Reading from the N-terminus, the 455-residue chain is tRNA modification GTPase MnmE (455 aa).

Residues Arg24, Glu81, and Lys120 each coordinate (6S)-5-formyl-5,6,7,8-tetrahydrofolate. The TrmE-type G domain occupies 216 to 378 (GMTVVIAGRP…LREHLKACMG (163 aa)). K(+) is bound at residue Asn226. GTP-binding positions include 226 to 231 (NAGKSS), 245 to 251 (TDIAGTT), 270 to 273 (DTAG), 335 to 338 (NKAD), and 359 to 361 (SAR). Mg(2+) is bound at residue Ser230. Thr245, Ile247, and Thr250 together coordinate K(+). Thr251 contacts Mg(2+). Residue Lys455 participates in (6S)-5-formyl-5,6,7,8-tetrahydrofolate binding.

The protein belongs to the TRAFAC class TrmE-Era-EngA-EngB-Septin-like GTPase superfamily. TrmE GTPase family. Homodimer. Heterotetramer of two MnmE and two MnmG subunits. It depends on K(+) as a cofactor.

The protein localises to the cytoplasm. Exhibits a very high intrinsic GTPase hydrolysis rate. Involved in the addition of a carboxymethylaminomethyl (cmnm) group at the wobble position (U34) of certain tRNAs, forming tRNA-cmnm(5)s(2)U34. The chain is tRNA modification GTPase MnmE from Pseudomonas aeruginosa (strain UCBPP-PA14).